The sequence spans 422 residues: Succinate--CoA ligase [ADP-forming] subunit beta, mitochondrial (422 aa).

Residues 1–27 (MVRGSLGKLASRALSVAGKWQHQQLRR) constitute a mitochondrion transit peptide. The 244-residue stretch at 36 to 279 (AELMGKYGIN…TTQEDPREVA (244 aa)) folds into the ATP-grasp domain. ATP contacts are provided by residues K75, 82-84 (GRG), and E142. Mg(2+)-binding residues include N234 and D248. Residues N299 and 356 to 358 (GIM) each bind substrate.

Belongs to the succinate/malate CoA ligase beta subunit family. Heterodimer of an alpha and a beta subunit. Mg(2+) serves as cofactor.

Its subcellular location is the mitochondrion. The enzyme catalyses succinate + ATP + CoA = succinyl-CoA + ADP + phosphate. Its pathway is carbohydrate metabolism; tricarboxylic acid cycle; succinate from succinyl-CoA (ligase route): step 1/1. Succinyl-CoA synthetase functions in the citric acid cycle (TCA), coupling the hydrolysis of succinyl-CoA to the synthesis of ATP and thus represents the only step of substrate-level phosphorylation in the TCA. The beta subunit provides nucleotide specificity of the enzyme and binds the substrate succinate, while the binding sites for coenzyme A and phosphate are found in the alpha subunit. The chain is Succinate--CoA ligase [ADP-forming] subunit beta, mitochondrial from Oryza sativa subsp. japonica (Rice).